Here is a 96-residue protein sequence, read N- to C-terminus: Dynein light chain roadblock-type 2 (96 aa).

The residue at position 2 (Ala-2) is an N-acetylalanine.

The protein belongs to the GAMAD family. Homodimer. The cytoplasmic dynein 1 complex consists of two catalytic heavy chains (HCs) and a number of non-catalytic subunits presented by intermediate chains (ICs), light intermediate chains (LICs) and light chains (LCs); the composition seems to vary in respect to the IC, LIC and LC composition. The heavy chain homodimer serves as a scaffold for the probable homodimeric assembly of the respective non-catalytic subunits. The ICs and LICs bind directly to the HC dimer and the LCs assemble on the IC dimer. Interacts with DYNC1I1 and DYNC1I2. Self-associates. Interacts with DYNLRB1. High expression in heart, brain, placenta, skeletal muscle, prostate and small intestine; moderate in kidney, pancreas, spleen, testis, ovary and colon; low in lung, liver, thymus and leukocyte.

It localises to the cytoplasm. It is found in the cytoskeleton. Acts as one of several non-catalytic accessory components of the cytoplasmic dynein 1 complex that are thought to be involved in linking dynein to cargos and to adapter proteins that regulate dynein function. Cytoplasmic dynein 1 acts as a motor for the intracellular retrograde motility of vesicles and organelles along microtubules. The chain is Dynein light chain roadblock-type 2 (DYNLRB2) from Homo sapiens (Human).